Consider the following 453-residue polypeptide: Ribosomal protein uS12 methylthiotransferase RimO (453 aa).

An MTTase N-terminal domain is found at 6-116; the sequence is PTVGIVSLGC…VLTAVHEAIA (111 aa). [4Fe-4S] cluster contacts are provided by Cys15, Cys51, Cys80, Cys148, Cys152, and Cys155. Positions 134–371 constitute a Radical SAM core domain; sequence LTPKHFAYLK…MQLQQQISAN (238 aa). One can recognise a TRAM domain in the interval 374-440; that stretch reads QAKIGKTIQV…EYDLWATPVG (67 aa).

This sequence belongs to the methylthiotransferase family. RimO subfamily. Requires [4Fe-4S] cluster as cofactor.

The protein resides in the cytoplasm. It catalyses the reaction L-aspartate(89)-[ribosomal protein uS12]-hydrogen + (sulfur carrier)-SH + AH2 + 2 S-adenosyl-L-methionine = 3-methylsulfanyl-L-aspartate(89)-[ribosomal protein uS12]-hydrogen + (sulfur carrier)-H + 5'-deoxyadenosine + L-methionine + A + S-adenosyl-L-homocysteine + 2 H(+). Functionally, catalyzes the methylthiolation of an aspartic acid residue of ribosomal protein uS12. The chain is Ribosomal protein uS12 methylthiotransferase RimO from Hydrogenovibrio crunogenus (strain DSM 25203 / XCL-2) (Thiomicrospira crunogena).